Reading from the N-terminus, the 25-residue chain is Xenoposin precursor fragment BM3 (25 aa).

Expressed by the skin glands.

The protein resides in the secreted. Antimicrobial peptide. The sequence is that of Xenoposin precursor fragment BM3 from Xenopus boumbaensis (Mawa clawed frog).